The sequence spans 255 residues: Small ribosomal subunit protein eS1 (255 aa).

Alanine 2 carries the N-acetylalanine; partial modification.

This sequence belongs to the eukaryotic ribosomal protein eS1 family. In terms of assembly, component of the small ribosomal subunit. Mature ribosomes consist of a small (40S) and a large (60S) subunit. The 40S subunit contains about 33 different proteins and 1 molecule of RNA (18S). The 60S subunit contains about 49 different proteins and 3 molecules of RNA (25S, 5.8S and 5S).

The protein localises to the cytoplasm. The chain is Small ribosomal subunit protein eS1 from Arthroderma otae (strain ATCC MYA-4605 / CBS 113480) (Microsporum canis).